The following is an 878-amino-acid chain: Phosphoenolpyruvate carboxylase (878 aa).

Catalysis depends on residues H137 and K545.

This sequence belongs to the PEPCase type 1 family. The cofactor is Mg(2+).

The enzyme catalyses oxaloacetate + phosphate = phosphoenolpyruvate + hydrogencarbonate. Functionally, forms oxaloacetate, a four-carbon dicarboxylic acid source for the tricarboxylic acid cycle. The polypeptide is Phosphoenolpyruvate carboxylase (Serratia proteamaculans (strain 568)).